A 395-amino-acid polypeptide reads, in one-letter code: MRTLGGFTFPCDAPVFVRVDFNVPMDEVGTITDDLRIRASLPTIESLLGRGAPLILISHLGRPVKNEQQGFSLKPCAERLSEYIGVNVPLVDFLDLDTKLYGELTRHLDKSGIVLFENIRFFAEETSKAQADRRILAEQLAPFAGAYVNDAFGASHRRHASVYELAQAFSNKAAGFLIESEMQAFSHLASEAKRPYTVILGGAKLSDKLRLIENILPTVDRLLLCGGMAFTFLAAQGCETGKSLLEESFISEANKIIDFAKQNNVELILPVDVIEARSLTSPLGVVSKAESISYMGLDIGPETQSIFRNVIQDSKTVFWNGPAGLFENPSFSNGTRALLDALSSSSAFTFIGGGDTAAAVSLLGFDYGDFSHVSTGGGACLELLEGKILPALEVL.

Substrate-binding positions include 20 to 22 (DFN), Arg36, 59 to 62 (HLGR), Arg120, and Arg157. ATP is bound by residues Lys208, Gly296, Glu327, and 353–356 (GGDT).

The protein belongs to the phosphoglycerate kinase family. As to quaternary structure, monomer.

Its subcellular location is the cytoplasm. The catalysed reaction is (2R)-3-phosphoglycerate + ATP = (2R)-3-phospho-glyceroyl phosphate + ADP. Its pathway is carbohydrate degradation; glycolysis; pyruvate from D-glyceraldehyde 3-phosphate: step 2/5. This is Phosphoglycerate kinase from Tropheryma whipplei (strain TW08/27) (Whipple's bacillus).